The following is a 313-amino-acid chain: Ribosomal protein L11 methyltransferase (313 aa).

S-adenosyl-L-methionine is bound by residues Thr-164, Gly-185, Asp-207, and Asn-249.

Belongs to the methyltransferase superfamily. PrmA family.

It localises to the cytoplasm. It catalyses the reaction L-lysyl-[protein] + 3 S-adenosyl-L-methionine = N(6),N(6),N(6)-trimethyl-L-lysyl-[protein] + 3 S-adenosyl-L-homocysteine + 3 H(+). Functionally, methylates ribosomal protein L11. This Clostridium botulinum (strain Alaska E43 / Type E3) protein is Ribosomal protein L11 methyltransferase.